The sequence spans 264 residues: Phosphatidylglycerol--prolipoprotein diacylglyceryl transferase (264 aa).

3 helical membrane-spanning segments follow: residues 17 to 37, 59 to 79, and 95 to 115; these read LAIHWYGLTYLVAFGLFLWLA, LLFYGVLGVIIGGRLGYVLFY, and WKGGMAFHGGLLGVIGAMALF. Arginine 142 contributes to the a 1,2-diacyl-sn-glycero-3-phospho-(1'-sn-glycerol) binding site. Helical transmembrane passes span 205–225 and 241–261; these read GQVSGAFLVGYGVLRFIAEYF and MGQWLCVPMVAAGVALWVWAG.

Belongs to the Lgt family.

It localises to the cell inner membrane. It carries out the reaction L-cysteinyl-[prolipoprotein] + a 1,2-diacyl-sn-glycero-3-phospho-(1'-sn-glycerol) = an S-1,2-diacyl-sn-glyceryl-L-cysteinyl-[prolipoprotein] + sn-glycerol 1-phosphate + H(+). It participates in protein modification; lipoprotein biosynthesis (diacylglyceryl transfer). Functionally, catalyzes the transfer of the diacylglyceryl group from phosphatidylglycerol to the sulfhydryl group of the N-terminal cysteine of a prolipoprotein, the first step in the formation of mature lipoproteins. This is Phosphatidylglycerol--prolipoprotein diacylglyceryl transferase from Methylibium petroleiphilum (strain ATCC BAA-1232 / LMG 22953 / PM1).